The following is a 216-amino-acid chain: Peptide methionine sulfoxide reductase MsrA (216 aa).

C54 is a catalytic residue.

Belongs to the MsrA Met sulfoxide reductase family.

The catalysed reaction is L-methionyl-[protein] + [thioredoxin]-disulfide + H2O = L-methionyl-(S)-S-oxide-[protein] + [thioredoxin]-dithiol. It catalyses the reaction [thioredoxin]-disulfide + L-methionine + H2O = L-methionine (S)-S-oxide + [thioredoxin]-dithiol. Has an important function as a repair enzyme for proteins that have been inactivated by oxidation. Catalyzes the reversible oxidation-reduction of methionine sulfoxide in proteins to methionine. The polypeptide is Peptide methionine sulfoxide reductase MsrA (Xanthomonas campestris pv. phaseoli).